The following is an 87-amino-acid chain: Small ribosomal subunit protein bS20 (87 aa).

The disordered stretch occupies residues 1 to 26; that stretch reads MANIKSAQKRAVQSEKRRQHNASQRS.

The protein belongs to the bacterial ribosomal protein bS20 family.

Functionally, binds directly to 16S ribosomal RNA. The sequence is that of Small ribosomal subunit protein bS20 from Glaesserella parasuis serovar 5 (strain SH0165) (Haemophilus parasuis).